A 143-amino-acid chain; its full sequence is Crossover junction endodeoxyribonuclease Hjc (143 aa).

Glutamate 12 provides a ligand contact to Mg(2+). Serine 32 is a catalytic residue. Residues aspartate 42 and glutamate 55 each contribute to the Mg(2+) site.

This sequence belongs to the Holliday junction resolvase Hjc family. As to quaternary structure, homodimer. Mg(2+) serves as cofactor.

The enzyme catalyses Endonucleolytic cleavage at a junction such as a reciprocal single-stranded crossover between two homologous DNA duplexes (Holliday junction).. Its function is as follows. A structure-specific endonuclease that resolves Holliday junction (HJ) intermediates during genetic recombination. Cleaves 4-way DNA junctions introducing paired nicks in opposing strands, leaving a 5'-terminal phosphate and a 3'-terminal hydroxyl group that are subsequently ligated to produce recombinant products. Hjc, Hjm (Hel308) and PINA coordinate HJ migration and cleavage of replication forks in a coordinated way. This is Crossover junction endodeoxyribonuclease Hjc from Saccharolobus islandicus (strain REY15A) (Sulfolobus islandicus).